The primary structure comprises 428 residues: Histone deacetylase 3 (428 aa).

The interval 3–316 (NRTAYFYDPD…WTFETSLLVE (314 aa)) is histone deacetylase. Positions 17, 21, and 25 each coordinate 1D-myo-inositol 1,4,5,6-tetrakisphosphate. H135 is an active-site residue. Zn(2+) is bound by residues D170, H172, and D259. A 1D-myo-inositol 1,4,5,6-tetrakisphosphate-binding site is contributed by R265. Positions 381-428 (PSDLLSYERPDEADPEERGSEENFSRPEAANEFYDGDHDHDKESDVEI) are disordered. Composition is skewed to basic and acidic residues over residues 386-405 (SYER…ENFS) and 415-428 (DGDH…DVEI).

It belongs to the histone deacetylase family. HD type 1 subfamily.

The protein localises to the nucleus. Its subcellular location is the chromosome. It is found in the cytoplasm. The protein resides in the cytosol. The catalysed reaction is N(6)-acetyl-L-lysyl-[histone] + H2O = L-lysyl-[histone] + acetate. It carries out the reaction N(6)-acetyl-L-lysyl-[protein] + H2O = L-lysyl-[protein] + acetate. The enzyme catalyses N(6)-(2E)-butenoyl-L-lysyl-[protein] + H2O = (2E)-2-butenoate + L-lysyl-[protein]. It catalyses the reaction N(6)-(2-hydroxyisobutanoyl)-L-lysyl-[protein] + H2O = 2-hydroxy-2-methylpropanoate + L-lysyl-[protein]. The catalysed reaction is N(6)-[(S)-lactoyl]-L-lysyl-[protein] + H2O = (S)-lactate + L-lysyl-[protein]. With respect to regulation, inositol tetraphosphate (1D-myo-inositol 1,4,5,6-tetrakisphosphate) promotes the histone deacetylase activity by acting as an intermolecular glue between hdac3 and N-Cor repressor complex components. Histone deacetylase that catalyzes the deacetylation of lysine residues on the N-terminal part of the core histones (H2A, H2B, H3 and H4), and some other non-histone substrates. Histone deacetylation gives a tag for epigenetic repression and plays an important role in transcriptional regulation, cell cycle progression and developmental events. Histone deacetylases act via the formation of large multiprotein complexes, such as N-Cor repressor complex, which activate the histone deacetylase activity. Participates in the BCL6 transcriptional repressor activity by deacetylating the H3 'Lys-27' (H3K27) on enhancer elements, antagonizing EP300 acetyltransferase activity and repressing proximal gene expression. Also functions as a deacetylase for non-histone targets. In addition to protein deacetylase activity, also acts as a protein-lysine deacylase by recognizing other acyl groups: catalyzes removal of (2E)-butenoyl (crotonyl), lactoyl (lactyl) and 2-hydroxyisobutanoyl (2-hydroxyisobutyryl) acyl groups from lysine residues, leading to protein decrotonylation, delactylation and de-2-hydroxyisobutyrylation, respectively. This chain is Histone deacetylase 3 (hdac3), found in Danio rerio (Zebrafish).